The sequence spans 237 residues: Sugar fermentation stimulation protein homolog (237 aa).

This sequence belongs to the SfsA family.

In Pseudomonas fluorescens (strain ATCC BAA-477 / NRRL B-23932 / Pf-5), this protein is Sugar fermentation stimulation protein homolog.